A 77-amino-acid chain; its full sequence is Translational regulator CsrA (77 aa).

The disordered stretch occupies residues 58-77; the sequence is ANRRTAEETLDQASRLLSQK. A compositionally biased stretch (polar residues) spans 68 to 77; sequence DQASRLLSQK.

Belongs to the CsrA/RsmA family. Homodimer; the beta-strands of each monomer intercalate to form a hydrophobic core, while the alpha-helices form wings that extend away from the core.

Its subcellular location is the cytoplasm. Its function is as follows. A translational regulator that binds mRNA to regulate translation initiation and/or mRNA stability. Usually binds in the 5'-UTR at or near the Shine-Dalgarno sequence preventing ribosome-binding, thus repressing translation. Its main target seems to be the major flagellin gene, while its function is anatagonized by FliW. The sequence is that of Translational regulator CsrA from Magnetococcus marinus (strain ATCC BAA-1437 / JCM 17883 / MC-1).